Reading from the N-terminus, the 570-residue chain is Endo-1,4-beta-xylanase 5-like (570 aa).

Residues 1-23 (MNSIKNGFFLCMIFLLWCHVDSG) form the signal peptide. N-linked (GlcNAc...) asparagine glycosylation is found at Asn197, Asn261, and Asn307. The GH10 domain occupies 202–501 (KGVVISLKQT…TQTGDVIDKL (300 aa)). The Proton donor role is filled by Glu332. Asn346 carries an N-linked (GlcNAc...) asparagine glycan. The active-site Nucleophile is the Glu439. Asn490, Asn515, Asn537, and Asn545 each carry an N-linked (GlcNAc...) asparagine glycan.

Belongs to the glycosyl hydrolase 10 (cellulase F) family.

The catalysed reaction is Endohydrolysis of (1-&gt;4)-beta-D-xylosidic linkages in xylans.. Its pathway is glycan degradation; xylan degradation. Binds to and hydrolyzes insoluble and soluble xylan substrates. The protein is Endo-1,4-beta-xylanase 5-like of Arabidopsis thaliana (Mouse-ear cress).